We begin with the raw amino-acid sequence, 979 residues long: Translation initiation factor IF-2 (979 aa).

The disordered stretch occupies residues 33 to 391; sequence VKSHSSTITT…TPPAEITLTE (359 aa). Composition is skewed to low complexity over residues 54–63 and 139–150; these read QKRPQAPKAQ and AKTTSPKAEPAA. The segment covering 151–166 has biased composition (pro residues); sequence PAAPKPKLMGPPPRPT. Over residues 234–252 the composition is skewed to acidic residues; sequence PELDEEPDTNNVEGDDDAT. 2 stretches are compositionally biased toward basic residues: residues 263-278 and 294-303; these read PAAK…PSKR and TKTSKLKRRP. Residues 314–328 show a composition bias toward polar residues; it reads GTTTNNNAEVPSVSL. Positions 371-380 are enriched in basic and acidic residues; it reads KEQRRDRPDV. A tr-type G domain is found at 468 to 641; sequence HRPPVVTIMG…LLVSEIEELS (174 aa). Residues 477 to 484 are G1; that stretch reads GHVDHGKT. 477-484 provides a ligand contact to GTP; the sequence is GHVDHGKT. The G2 stretch occupies residues 502-506; that stretch reads GITQH. The interval 527–530 is G3; the sequence is DTPG. Residues 527–531 and 581–584 contribute to the GTP site; these read DTPGH and NKMD. Positions 581-584 are G4; sequence NKMD. The G5 stretch occupies residues 617–619; the sequence is SAL.

The protein belongs to the TRAFAC class translation factor GTPase superfamily. Classic translation factor GTPase family. IF-2 subfamily.

It localises to the cytoplasm. Functionally, one of the essential components for the initiation of protein synthesis. Protects formylmethionyl-tRNA from spontaneous hydrolysis and promotes its binding to the 30S ribosomal subunits. Also involved in the hydrolysis of GTP during the formation of the 70S ribosomal complex. The polypeptide is Translation initiation factor IF-2 (Picosynechococcus sp. (strain ATCC 27264 / PCC 7002 / PR-6) (Agmenellum quadruplicatum)).